The sequence spans 164 residues: Crossover junction endodeoxyribonuclease RuvC (164 aa).

Catalysis depends on residues Asp-7, Glu-66, and Asp-138. Positions 7, 66, and 138 each coordinate Mg(2+).

This sequence belongs to the RuvC family. Homodimer which binds Holliday junction (HJ) DNA. The HJ becomes 2-fold symmetrical on binding to RuvC with unstacked arms; it has a different conformation from HJ DNA in complex with RuvA. In the full resolvosome a probable DNA-RuvA(4)-RuvB(12)-RuvC(2) complex forms which resolves the HJ. It depends on Mg(2+) as a cofactor.

The protein resides in the cytoplasm. It carries out the reaction Endonucleolytic cleavage at a junction such as a reciprocal single-stranded crossover between two homologous DNA duplexes (Holliday junction).. The RuvA-RuvB-RuvC complex processes Holliday junction (HJ) DNA during genetic recombination and DNA repair. Endonuclease that resolves HJ intermediates. Cleaves cruciform DNA by making single-stranded nicks across the HJ at symmetrical positions within the homologous arms, yielding a 5'-phosphate and a 3'-hydroxyl group; requires a central core of homology in the junction. The consensus cleavage sequence is 5'-(A/T)TT(C/G)-3'. Cleavage occurs on the 3'-side of the TT dinucleotide at the point of strand exchange. HJ branch migration catalyzed by RuvA-RuvB allows RuvC to scan DNA until it finds its consensus sequence, where it cleaves and resolves the cruciform DNA. This chain is Crossover junction endodeoxyribonuclease RuvC, found in Paracoccus denitrificans (strain Pd 1222).